We begin with the raw amino-acid sequence, 306 residues long: Ribosomal protein L11 methyltransferase (306 aa).

Threonine 154, glycine 179, aspartate 201, and asparagine 242 together coordinate S-adenosyl-L-methionine.

This sequence belongs to the methyltransferase superfamily. PrmA family.

The protein localises to the cytoplasm. It catalyses the reaction L-lysyl-[protein] + 3 S-adenosyl-L-methionine = N(6),N(6),N(6)-trimethyl-L-lysyl-[protein] + 3 S-adenosyl-L-homocysteine + 3 H(+). Functionally, methylates ribosomal protein L11. This chain is Ribosomal protein L11 methyltransferase, found in Stenotrophomonas maltophilia (strain R551-3).